The sequence spans 303 residues: MSDVITTDQPASATSLLQAKGIANLVERALLTEVRLTPKPGLVDIRNSGAHKDMDLALFEKSTLAVAPWMENFYQLGYDTSALEAELVLPMLRPIGMACEADMLQATGGVNTHRGAVFSFGLISAVTGRMVALEEELEQNRICYWVARMCRDLVAKELSSEATNAATSKSVEHFLHYGLSGARGEAESGFQTVRTVALPIFERIRAQNEDMNLALLQTLLHLMAWNNDTNLVSRGALKGLYYVQQQAQKMLWEGGVLMRGGLEALQAFDDELIARNLSPGGSADLLAVTWFLSHFPKGETFAD.

It belongs to the CitG/MdcB family.

It catalyses the reaction 3'-dephospho-CoA + ATP = 2'-(5''-triphospho-alpha-D-ribosyl)-3'-dephospho-CoA + adenine. Functionally, catalyzes the formation of 2-(5''-triphosphoribosyl)-3'-dephosphocoenzyme-A, the precursor of the prosthetic group of the holo-acyl carrier protein (gamma chain) of citrate lyase, from ATP and dephospho-CoA. The sequence is that of 2-(5''-triphosphoribosyl)-3'-dephosphocoenzyme-A synthase from Escherichia fergusonii (strain ATCC 35469 / DSM 13698 / CCUG 18766 / IAM 14443 / JCM 21226 / LMG 7866 / NBRC 102419 / NCTC 12128 / CDC 0568-73).